The chain runs to 445 residues: MKLRSTALVKGFRQSTPYVNAHRGKTMVIMLGGEAVADRNFGNIISDIALLHSLGVKIVLVHGARPQINQLLEKQDCHTPYHKNIRVTDEYSLGVAMQAAGQLQLAITARLSMSLNNTPMAGTQLNVMSGNFITAQPLGVDDGTDYCHSGRIRRIDIEGINRTLDQGSIVLLGPIASSVTGESFNLLSEEVATQVAIRLKADKLIGFCSEQGVTDESGNVLAELFPKDAKQILERLTESQNPAEDMSTGTLRFLKGAISACRAGVPRCHLISYKVDGALIQELFSFDGIGTQVVMASAEQVRQAQIDDIGGIFDLIRPLEEQGILVRRSREQLEQEVHRFTIIEKDGLIIGCAALYAYPEDHMAEMACVAIHPDYRDGNRGQILLDYMRHQSKSRDIDQIFVLTTHSLHWFREQGFYEIAVDELPMEKQGLYNYQRNSKILALNV.

The region spanning 299–438 (EQVRQAQIDD…QGLYNYQRNS (140 aa)) is the N-acetyltransferase domain.

The protein belongs to the acetyltransferase family. ArgA subfamily.

It localises to the cytoplasm. The catalysed reaction is L-glutamate + acetyl-CoA = N-acetyl-L-glutamate + CoA + H(+). The protein operates within amino-acid biosynthesis; L-arginine biosynthesis; N(2)-acetyl-L-ornithine from L-glutamate: step 1/4. The sequence is that of Amino-acid acetyltransferase from Vibrio atlanticus (strain LGP32) (Vibrio splendidus (strain Mel32)).